The following is a 775-amino-acid chain: 1,4-alpha-glucan branching enzyme GlgB (775 aa).

Catalysis depends on Asp431, which acts as the Nucleophile. Residue Glu484 is the Proton donor of the active site.

Belongs to the glycosyl hydrolase 13 family. GlgB subfamily. As to quaternary structure, monomer.

The enzyme catalyses Transfers a segment of a (1-&gt;4)-alpha-D-glucan chain to a primary hydroxy group in a similar glucan chain.. It participates in glycan biosynthesis; glycogen biosynthesis. Its function is as follows. Catalyzes the formation of the alpha-1,6-glucosidic linkages in glycogen by scission of a 1,4-alpha-linked oligosaccharide from growing alpha-1,4-glucan chains and the subsequent attachment of the oligosaccharide to the alpha-1,6 position. This is 1,4-alpha-glucan branching enzyme GlgB from Parasynechococcus marenigrum (strain WH8102).